Reading from the N-terminus, the 60-residue chain is UPF0291 protein CTC_01690.1 (60 aa).

Belongs to the UPF0291 family.

The protein localises to the cytoplasm. The chain is UPF0291 protein CTC_01690.1 from Clostridium tetani (strain Massachusetts / E88).